Consider the following 467-residue polypeptide: Probable lipase C1672.09 (467 aa).

Residues 1-17 (MIQLPFIQRLKWEEYMA) are Cytoplasmic-facing. Residues 18–38 (LFLGFFFVIFEKLLSCLAFMI) traverse the membrane as a helical; Signal-anchor for type II membrane protein segment. Topologically, residues 39–467 (HNTLGLFYRS…NHIAPRNKPI (429 aa)) are lumenal. Ser-66 is subject to Phosphoserine. Positions 127 to 421 (PVVYCHHGLL…SYEHLDMIWA (295 aa)) constitute an AB hydrolase-1 domain. Ser-222 functions as the Nucleophile in the catalytic mechanism. 2 N-linked (GlcNAc...) asparagine glycosylation sites follow: Asn-311 and Asn-316. Active-site charge relay system residues include Asp-389 and His-415. Over residues 440 to 457 (HHPPEHEENDKENREIQK) the composition is skewed to basic and acidic residues. Residues 440–467 (HHPPEHEENDKENREIQKNHIAPRNKPI) are disordered.

Belongs to the AB hydrolase superfamily. Lipase family.

Its subcellular location is the cytoplasm. The protein localises to the membrane. Its function is as follows. Probable lipase. In Schizosaccharomyces pombe (strain 972 / ATCC 24843) (Fission yeast), this protein is Probable lipase C1672.09.